The chain runs to 338 residues: Lipoate-protein ligase A (338 aa).

Positions 29 to 216 (PATQRVLFLW…AFFAHYGERV (188 aa)) constitute a BPL/LPL catalytic domain. Residues arginine 71, 76–79 (GAVF), and lysine 134 contribute to the ATP site. Lysine 134 contacts (R)-lipoate.

This sequence belongs to the LplA family. In terms of assembly, monomer.

It localises to the cytoplasm. It carries out the reaction L-lysyl-[lipoyl-carrier protein] + (R)-lipoate + ATP = N(6)-[(R)-lipoyl]-L-lysyl-[lipoyl-carrier protein] + AMP + diphosphate + H(+). It participates in protein modification; protein lipoylation via exogenous pathway; protein N(6)-(lipoyl)lysine from lipoate: step 1/2. The protein operates within protein modification; protein lipoylation via exogenous pathway; protein N(6)-(lipoyl)lysine from lipoate: step 2/2. Functionally, catalyzes both the ATP-dependent activation of exogenously supplied lipoate to lipoyl-AMP and the transfer of the activated lipoyl onto the lipoyl domains of lipoate-dependent enzymes. The sequence is that of Lipoate-protein ligase A from Escherichia coli O8 (strain IAI1).